A 303-amino-acid chain; its full sequence is Pseudouridine-5'-phosphate glycosidase (303 aa).

The active-site Proton donor is Glu25. Residues Lys87 and Val107 each contribute to the substrate site. Position 139 (Asp139) interacts with Mn(2+). Ser141–Asp143 contacts substrate. Lys160 (nucleophile) is an active-site residue.

Belongs to the pseudouridine-5'-phosphate glycosidase family. Homotrimer. Mn(2+) is required as a cofactor.

It catalyses the reaction D-ribose 5-phosphate + uracil = psi-UMP + H2O. Its function is as follows. Catalyzes the reversible cleavage of pseudouridine 5'-phosphate (PsiMP) to ribose 5-phosphate and uracil. Functions biologically in the cleavage direction, as part of a pseudouridine degradation pathway. In Hahella chejuensis (strain KCTC 2396), this protein is Pseudouridine-5'-phosphate glycosidase.